A 301-amino-acid polypeptide reads, in one-letter code: HPr kinase/phosphorylase (301 aa).

Active-site residues include His-134 and Lys-155. An ATP-binding site is contributed by 149–156 (GKSGLGKS). Ser-156 is a Mg(2+) binding site. Asp-173 (proton acceptor; for phosphorylation activity. Proton donor; for dephosphorylation activity) is an active-site residue. The segment at 196 to 205 (LEVRGLGIIN) is important for the catalytic mechanism of both phosphorylation and dephosphorylation. Residue Glu-197 participates in Mg(2+) binding. Residue Arg-239 is part of the active site. An important for the catalytic mechanism of dephosphorylation region spans residues 260 to 265 (PITPGK).

It belongs to the HPrK/P family. As to quaternary structure, homohexamer. Requires Mg(2+) as cofactor.

The catalysed reaction is [HPr protein]-L-serine + ATP = [HPr protein]-O-phospho-L-serine + ADP + H(+). The enzyme catalyses [HPr protein]-O-phospho-L-serine + phosphate + H(+) = [HPr protein]-L-serine + diphosphate. Its function is as follows. Catalyzes the ATP- as well as the pyrophosphate-dependent phosphorylation of a specific serine residue in HPr, a phosphocarrier protein of the phosphoenolpyruvate-dependent sugar phosphotransferase system (PTS). HprK/P also catalyzes the pyrophosphate-producing, inorganic phosphate-dependent dephosphorylation (phosphorolysis) of seryl-phosphorylated HPr (P-Ser-HPr). The two antagonistic activities of HprK/P are regulated by several intracellular metabolites, which change their concentration in response to the absence or presence of rapidly metabolisable carbon sources (glucose, fructose, etc.) in the growth medium. Therefore, by controlling the phosphorylation state of HPr, HPrK/P is a sensor enzyme that plays a major role in the regulation of carbon metabolism and sugar transport: it mediates carbon catabolite repression (CCR), and regulates PTS-catalyzed carbohydrate uptake and inducer exclusion. This is HPr kinase/phosphorylase from Malacoplasma penetrans (strain HF-2) (Mycoplasma penetrans).